The following is a 291-amino-acid chain: N-acetylmannosamine kinase (291 aa).

Residues 5–12 (AIDIGGTK) and 132–139 (GVGGGVVC) each bind ATP. Residues histidine 156, cysteine 166, cysteine 168, and cysteine 173 each contribute to the Zn(2+) site.

The protein belongs to the ROK (NagC/XylR) family. NanK subfamily. In terms of assembly, homodimer.

The catalysed reaction is an N-acyl-D-mannosamine + ATP = an N-acyl-D-mannosamine 6-phosphate + ADP + H(+). It participates in amino-sugar metabolism; N-acetylneuraminate degradation; D-fructose 6-phosphate from N-acetylneuraminate: step 2/5. Functionally, catalyzes the phosphorylation of N-acetylmannosamine (ManNAc) to ManNAc-6-P. This is N-acetylmannosamine kinase from Salmonella paratyphi A (strain ATCC 9150 / SARB42).